A 449-amino-acid polypeptide reads, in one-letter code: tRNA-2-methylthio-N(6)-dimethylallyladenosine synthase (449 aa).

An MTTase N-terminal domain is found at 3-124 (KMLYIKTYGC…LPTMLEKLDS (122 aa)). Residues C12, C48, C87, C163, C167, and C170 each contribute to the [4Fe-4S] cluster site. Residues 149–380 (KSPTVSGLVS…QAQLMLQQLE (232 aa)) enclose the Radical SAM core domain. One can recognise a TRAM domain in the interval 383-447 (QKLIGKVVPV…ASSLFGEVCP (65 aa)).

This sequence belongs to the methylthiotransferase family. MiaB subfamily. As to quaternary structure, monomer. The cofactor is [4Fe-4S] cluster.

It is found in the cytoplasm. The catalysed reaction is N(6)-dimethylallyladenosine(37) in tRNA + (sulfur carrier)-SH + AH2 + 2 S-adenosyl-L-methionine = 2-methylsulfanyl-N(6)-dimethylallyladenosine(37) in tRNA + (sulfur carrier)-H + 5'-deoxyadenosine + L-methionine + A + S-adenosyl-L-homocysteine + 2 H(+). Its function is as follows. Catalyzes the methylthiolation of N6-(dimethylallyl)adenosine (i(6)A), leading to the formation of 2-methylthio-N6-(dimethylallyl)adenosine (ms(2)i(6)A) at position 37 in tRNAs that read codons beginning with uridine. This Orientia tsutsugamushi (strain Boryong) (Rickettsia tsutsugamushi) protein is tRNA-2-methylthio-N(6)-dimethylallyladenosine synthase.